The primary structure comprises 1496 residues: Chromosome partition protein MukB (1496 aa).

63-70 (GGNGAGKS) provides a ligand contact to ATP. Coiled coils occupy residues 328–493 (KLEL…QRLS) and 536–632 (KMQA…APAW). The flexible hinge stretch occupies residues 694–811 (PDGSDDVRLN…EVPLFGRAAR (118 aa)). 2 coiled-coil regions span residues 861–1171 (NPEE…SAEE) and 1235–1291 (IDAI…LQNI). The segment covering 1082–1091 (RARSRRDELQ) has biased composition (basic and acidic residues). The segment at 1082-1101 (RARSRRDELQQRLSQQRSRK) is disordered.

Belongs to the SMC family. MukB subfamily. Homodimerization via its hinge domain. Binds to DNA via its C-terminal region. Interacts, and probably forms a ternary complex, with MukE and MukF via its C-terminal region. The complex formation is stimulated by calcium or magnesium. Interacts with tubulin-related protein FtsZ.

It localises to the cytoplasm. The protein localises to the nucleoid. Functionally, plays a central role in chromosome condensation, segregation and cell cycle progression. Functions as a homodimer, which is essential for chromosome partition. Involved in negative DNA supercoiling in vivo, and by this means organize and compact chromosomes. May achieve or facilitate chromosome segregation by condensation DNA from both sides of a centrally located replisome during cell division. The polypeptide is Chromosome partition protein MukB (Actinobacillus pleuropneumoniae serotype 3 (strain JL03)).